A 499-amino-acid chain; its full sequence is Probable aspartyl protease At4g16563 (499 aa).

The first 26 residues, 1–26 (MKTCLIFFLYTTILQYYFHFSVSSLS), serve as a signal peptide directing secretion. One can recognise a Peptidase A1 domain in the interval 83 to 487 (YLISLSVGSS…DLLNRRVGFA (405 aa)). Residue D101 is part of the active site. Residues C111 and C119 are joined by a disulfide bond. Residues N175 and N211 are each glycosylated (N-linked (GlcNAc...) asparagine). Residue D353 is part of the active site. C396 and C445 form a disulfide bridge. N-linked (GlcNAc...) asparagine glycosylation is found at N400 and N415.

Belongs to the peptidase A1 family.

The polypeptide is Probable aspartyl protease At4g16563 (Arabidopsis thaliana (Mouse-ear cress)).